A 203-amino-acid polypeptide reads, in one-letter code: Ribonuclease HII (203 aa).

The 187-residue stretch at 15–201 (LLVAGLDEAG…VAQAPLRFPE (187 aa)) folds into the RNase H type-2 domain. 3 residues coordinate a divalent metal cation: Asp-21, Glu-22, and Asp-111.

Belongs to the RNase HII family. Requires Mn(2+) as cofactor. Mg(2+) serves as cofactor.

It localises to the cytoplasm. It catalyses the reaction Endonucleolytic cleavage to 5'-phosphomonoester.. Endonuclease that specifically degrades the RNA of RNA-DNA hybrids. The sequence is that of Ribonuclease HII from Thermus thermophilus (strain ATCC BAA-163 / DSM 7039 / HB27).